Consider the following 1013-residue polypeptide: Chitin synthase A (1013 aa).

The N-linked (GlcNAc...) asparagine glycan is linked to Asn10. Disordered stretches follow at residues 26–83 (RYSY…AADW) and 95–218 (ERAD…RRGV). Residues 64-81 (TASRPASPARPWSPTRAA) show a composition bias toward low complexity. Over residues 154 to 173 (TISSRHGPQGSVQSFTSEST) the composition is skewed to polar residues. Residues Asn194 and Asn316 are each glycosylated (N-linked (GlcNAc...) asparagine). 5 helical membrane-spanning segments follow: residues 646–666 (LLQL…FFFI), 686–706 (IFIV…IFSM), 721–741 (MIVY…LIVL), 759–779 (LFVN…FTSF), and 792–811 (AQYF…YAFC). Residue Asn837 is glycosylated (N-linked (GlcNAc...) asparagine). Transmembrane regions (helical) follow at residues 892–912 (VSVW…VYGV) and 919–939 (VYLA…AIGS). N-linked (GlcNAc...) asparagine glycosylation is found at Asn967, Asn980, Asn989, and Asn995.

Belongs to the chitin synthase family. Class II subfamily. Mainly expressed in the metulae, phialides, and conidia.

Its subcellular location is the cell membrane. The protein localises to the cell septum. The enzyme catalyses [(1-&gt;4)-N-acetyl-beta-D-glucosaminyl](n) + UDP-N-acetyl-alpha-D-glucosamine = [(1-&gt;4)-N-acetyl-beta-D-glucosaminyl](n+1) + UDP + H(+). Functionally, polymerizes chitin, a structural polymer of the cell wall and septum, by transferring the sugar moiety of UDP-GlcNAc to the non-reducing end of the growing chitin polymer. Seems not to be involved in hyphal growth, but, with chsC, chsA shares critical functions in hyphal wall integrity and differentiation. ChsA and chsC share also overlapping roles in septum formation. Invoved in the production of the asexual spores (conidia) that are formed by differentiated aerial hyphae called conidiophores. The sequence is that of Chitin synthase A from Emericella nidulans (strain FGSC A4 / ATCC 38163 / CBS 112.46 / NRRL 194 / M139) (Aspergillus nidulans).